We begin with the raw amino-acid sequence, 89 residues long: Small ribosomal subunit protein uS15 (89 aa).

Belongs to the universal ribosomal protein uS15 family. Part of the 30S ribosomal subunit. Forms a bridge to the 50S subunit in the 70S ribosome, contacting the 23S rRNA.

Functionally, one of the primary rRNA binding proteins, it binds directly to 16S rRNA where it helps nucleate assembly of the platform of the 30S subunit by binding and bridging several RNA helices of the 16S rRNA. Its function is as follows. Forms an intersubunit bridge (bridge B4) with the 23S rRNA of the 50S subunit in the ribosome. This chain is Small ribosomal subunit protein uS15, found in Chlorobium chlorochromatii (strain CaD3).